A 123-amino-acid polypeptide reads, in one-letter code: Con-ikot-ikot (123 aa).

An N-terminal signal peptide occupies residues 1–18 (MAMNMSMTLCMFVMVVVA). Residues 19–37 (ATVIDSTQLQEPDLSRMRR) constitute a propeptide that is removed on maturation. 5 disulfides stabilise this stretch: Cys49-Cys80, Cys50-Cys89, Cys57-Cys72, Cys90-Cys118, and Cys96-Cys113.

In terms of assembly, homodimer; disulfide-linked. In terms of tissue distribution, expressed by the venom duct.

It localises to the secreted. Its function is as follows. Potently and selectively blocks the desensitization of ionotropic glutamate AMPA receptors (GRIA1, GRIA2, GRIA3 and GRIA4). Binds to a different site than does the drug cyclothiazide. The toxin acts like a straitjacket on the 'gating ring' of the ligand-binding domain (LBD) of the receptor. It does so by restraining the domains via both intra- and interdimer cross-links such that agonist-induced closure of the LBD 'clamshells' is transduced into an irislike expansion of the gating ring. Compared to other desensitization blockers, it is a poor stabilizer of the open channel because toxin-bound AMPA receptors undergo frequent brief closures. In vitro, application of the toxin to hippocampal slices causes a large and rapid increase in resting AMPA receptor-mediated current leading to neuronal death. The chain is Con-ikot-ikot from Conus striatus (Striated cone).